We begin with the raw amino-acid sequence, 214 residues long: Small ribosomal subunit protein uS5 (214 aa).

The S5 DRBM domain occupies 54–117; it reads MKYEVIDIGM…RDAKMHVIPV (64 aa).

Belongs to the universal ribosomal protein uS5 family. Part of the 30S ribosomal subunit. Contacts protein S4.

In terms of biological role, with S4 and S12 plays an important role in translational accuracy. This chain is Small ribosomal subunit protein uS5, found in Metallosphaera sedula (strain ATCC 51363 / DSM 5348 / JCM 9185 / NBRC 15509 / TH2).